We begin with the raw amino-acid sequence, 335 residues long: Protease HtpX homolog (335 aa).

The next 3 helical transmembrane spans lie at Val-9–Ala-29, Leu-42–Tyr-62, and Ile-64–Ile-84. His-168 provides a ligand contact to Zn(2+). The active site involves Glu-169. His-172 contributes to the Zn(2+) binding site. 2 helical membrane-spanning segments follow: residues Ala-179–Leu-199 and Ala-213–Phe-233. Glu-238 contacts Zn(2+).

Belongs to the peptidase M48B family. Zn(2+) serves as cofactor.

The protein localises to the cell membrane. The chain is Protease HtpX homolog from Archaeoglobus fulgidus (strain ATCC 49558 / DSM 4304 / JCM 9628 / NBRC 100126 / VC-16).